Here is a 465-residue protein sequence, read N- to C-terminus: Midnolin (465 aa).

The Ubiquitin-like domain maps to 32–106; that stretch reads MSLAIHSTTG…LTLVPTVEAG (75 aa). Disordered stretches follow at residues 185–262 and 400–445; these read SVAT…SRKP and RLRR…GLDF. Low complexity-rich tracts occupy residues 195–219 and 240–257; these read RPVS…PSPV and SPPA…SPTP. The required for nucleolar localization stretch occupies residues 397–424; the sequence is QQKRLRRKARRDARGPYHWTPSRKAGRS.

As to quaternary structure, interacts with GCK; the interaction occurs preferentially at low glucose levels. Interacts with the proteasome. Expressed at high levels in brain and liver with significantly lower levels in muscle.

The protein resides in the nucleus. Its subcellular location is the cytoplasm. It localises to the cytosol. It is found in the nucleolus. Functionally, facilitates the ubiquitin-independent proteasomal degradation of stimulus-induced transcription factors such as FOSB, EGR1, NR4A1, and IRF4 to the proteasome for degradation. Promotes also the degradation of other substrates such as CBX4. Plays a role in inhibiting the activity of glucokinase GCK and both glucose-induced and basal insulin secretion. The protein is Midnolin (Midn) of Mus musculus (Mouse).